Consider the following 439-residue polypeptide: Vacuolar protein sorting-associated protein 4 (439 aa).

Residues 8–75 (LSKGIDLVQK…TRAEQLKDHL (68 aa)) form the MIT domain. The segment at 76 to 113 (EKQAQNKSTAESSVNGSTKAKKSNGDGNGSGDDNDDAD) is disordered. Residues 80–93 (QNKSTAESSVNGST) show a composition bias toward polar residues. Position 175–182 (175–182 (GPPGTGKS)) interacts with ATP.

This sequence belongs to the AAA ATPase family. Monomer or homodimer (in nucleotide-free form). Decamer, dodecamer or tetradecamer of two stacked respective homooligomeric rings (when bound to ATP); the dodecameric form seems to be predominant.

It localises to the endosome membrane. In terms of biological role, pre-vacuolar protein sorting protein involved in the transport of biosynthetic membrane proteins from the prevacuolar/endosomal compartment to the vacuole. Required for multivesicular body (MVB) protein sorting. Catalyzes the ATP-dependent dissociation of class E VPS proteins from endosomal membranes, such as the disassembly of the ESCRT-III complex. Required for extracellular secretion of the secreted aspartyl proteases SAP2, SAP4, SAP5, and SAP6. Its regulation of the pre-vacuolar secretory pathway is critical for virulence. In Candida albicans (strain SC5314 / ATCC MYA-2876) (Yeast), this protein is Vacuolar protein sorting-associated protein 4.